The chain runs to 41 residues: Disintegrin obtustatin (41 aa).

4 disulfides stabilise this stretch: C1–C10, C6–C29, C7–C34, and C19–C36. Residues 1–41 form the Disintegrin domain; the sequence is CTTGPCCRQCKLKPAGTTCWKTSLTSHYCTGKSCDCPLYPG. A Cell attachment site; atypical (KTS) motif is present at residues 21–23; the sequence is KTS.

It belongs to the disintegrin family. Short disintegrin subfamily. In terms of assembly, monomer. As to expression, expressed by the venom gland.

Its subcellular location is the secreted. Is a potent and selective inhibitor of alpha-1/beta-1 (ITGA1/ITGB1) integrin. It blocks the adhesion of alpha-1/beta-1-expressing K562 cells to immobilized collagens IV and I with IC(50) of 2 and 0.5 nM, respectively. Potently inhibits angiogenesis in chicken and in mouse model and reduces tumor development by half. Is 25-fold less potent than viperistatin. The polypeptide is Disintegrin obtustatin (Macrovipera lebetina obtusa (Levant blunt-nosed viper)).